A 223-amino-acid polypeptide reads, in one-letter code: 7-cyano-7-deazaguanine synthase (223 aa).

15–25 (FSGGQDSTTCL) serves as a coordination point for ATP. Zn(2+) is bound by residues cysteine 191, cysteine 200, cysteine 203, and cysteine 206.

It belongs to the QueC family. In terms of assembly, homodimer. Zn(2+) serves as cofactor.

It catalyses the reaction 7-carboxy-7-deazaguanine + NH4(+) + ATP = 7-cyano-7-deazaguanine + ADP + phosphate + H2O + H(+). Its pathway is purine metabolism; 7-cyano-7-deazaguanine biosynthesis. Its function is as follows. Catalyzes the ATP-dependent conversion of 7-carboxy-7-deazaguanine (CDG) to 7-cyano-7-deazaguanine (preQ(0)). This chain is 7-cyano-7-deazaguanine synthase, found in Staphylococcus saprophyticus subsp. saprophyticus (strain ATCC 15305 / DSM 20229 / NCIMB 8711 / NCTC 7292 / S-41).